The following is a 198-amino-acid chain: Vacuolar iron transporter homolog 4 (198 aa).

Topologically, residues 1 to 32 are cytoplasmic; it reads MESNNNNLNLDMEKDQETTFDYSKRAQWLRAA. A helical membrane pass occupies residues 33 to 53; it reads VLGANDGLVSTASLMMGIGAV. Residues 54–60 are Vacuolar-facing; sequence KQDVRIM. The chain crosses the membrane as a helical span at residues 61 to 81; it reads LLTGFAGLVAGACSMAIGEFI. Residues 82 to 114 lie on the Cytoplasmic side of the membrane; the sequence is SVYSQYDIEVAQMKRESGGETKKEKLPSPTQAA. Residues 115–135 form a helical membrane-spanning segment; the sequence is IASALAFTLGAIVPLLAAAFV. Topologically, residues 136–141 are vacuolar; sequence KEYKVR. A helical transmembrane segment spans residues 142-162; sequence IGVIVAAVTLALVMFGWLGAV. The Cytoplasmic segment spans residues 163-174; the sequence is LGKAPVVKSLVR. A helical transmembrane segment spans residues 175-195; the sequence is VLIGGWLAMAITFGFTKLVGS. Residues 196–198 lie on the Vacuolar side of the membrane; it reads HGL.

It belongs to the CCC1 family.

It is found in the vacuole membrane. It carries out the reaction Fe(2+)(in) = Fe(2+)(out). Its function is as follows. Probable vacuolar iron transporter that may be involved in the regulation of iron distribution throughout the plant. The protein is Vacuolar iron transporter homolog 4 of Arabidopsis thaliana (Mouse-ear cress).